Here is a 113-residue protein sequence, read N- to C-terminus: Hydrogenase maturation factor HypA (113 aa).

Histidine 2 lines the Ni(2+) pocket. Positions 73, 76, 89, and 92 each coordinate Zn(2+).

It belongs to the HypA/HybF family.

Involved in the maturation of [NiFe] hydrogenases. Required for nickel insertion into the metal center of the hydrogenase. This chain is Hydrogenase maturation factor HypA, found in Rhodobacter capsulatus (Rhodopseudomonas capsulata).